Reading from the N-terminus, the 192-residue chain is Ion-translocating oxidoreductase complex subunit A (192 aa).

6 consecutive transmembrane segments (helical) span residues 5–25, 39–59, 65–85, 102–122, 134–154, and 171–191; these read LLLL…FLGL, IGMS…SYLV, LPFD…AVVV, ALGI…VALL, AIYG…FSAM, and AIAM…TGLV.

It belongs to the NqrDE/RnfAE family. As to quaternary structure, the complex is composed of six subunits: RnfA, RnfB, RnfC, RnfD, RnfE and RnfG.

It is found in the cell inner membrane. Functionally, part of a membrane-bound complex that couples electron transfer with translocation of ions across the membrane. The polypeptide is Ion-translocating oxidoreductase complex subunit A (Shewanella baltica (strain OS185)).